A 197-amino-acid chain; its full sequence is Cerebellin-3 (197 aa).

A signal peptide spans 1–24; sequence MGTEWHKPKLSLALVLLTLEAGWA. The 139-residue stretch at 59-197 folds into the C1q domain; sequence APPGRVAFAA…SFSGFLIFPL (139 aa). Residues 64–197 are necessary for interaction with CBLN3, and homotrimerization; it reads VAFAAVRSHH…SFSGFLIFPL (134 aa). Asparagine 82 carries N-linked (GlcNAc...) asparagine glycosylation.

As to quaternary structure, heterohexamer; disulfide-linked heterotrimers. Interacts with CBLN1. May also form oligomers with CBLN2 and CBLN4. Expressed in brain, restricted to the cerebellar cortex. Within the cerebellum, expressed in granule layers (at protein level). Also detected in postsynaptic Purkinje cell spines (at protein level).

The protein resides in the endoplasmic reticulum. It is found in the golgi apparatus. Its subcellular location is the cis-Golgi network. It localises to the secreted. The protein localises to the synapse. May be involved in synaptic functions in the CNS. The polypeptide is Cerebellin-3 (Cbln3) (Mus musculus (Mouse)).